Reading from the N-terminus, the 156-residue chain is Small ribosomal subunit protein uS7 (156 aa).

Belongs to the universal ribosomal protein uS7 family. As to quaternary structure, part of the 30S ribosomal subunit. Contacts proteins S9 and S11.

Functionally, one of the primary rRNA binding proteins, it binds directly to 16S rRNA where it nucleates assembly of the head domain of the 30S subunit. Is located at the subunit interface close to the decoding center, probably blocks exit of the E-site tRNA. This Mycoplasmopsis pulmonis (strain UAB CTIP) (Mycoplasma pulmonis) protein is Small ribosomal subunit protein uS7.